The chain runs to 239 residues: Uridylate kinase (239 aa).

ATP is bound at residue 12 to 15 (KLSG). Residues 20–25 (GDQGAG) are involved in allosteric activation by GTP. Gly-54 is a binding site for UMP. Residues Gly-55 and Arg-59 each coordinate ATP. UMP-binding positions include Asp-74 and 135–142 (TGNPFFTT). Residues Thr-162, Tyr-168, and Asp-171 each coordinate ATP.

The protein belongs to the UMP kinase family. As to quaternary structure, homohexamer.

The protein resides in the cytoplasm. It catalyses the reaction UMP + ATP = UDP + ADP. Its pathway is pyrimidine metabolism; CTP biosynthesis via de novo pathway; UDP from UMP (UMPK route): step 1/1. With respect to regulation, allosterically activated by GTP. Inhibited by UTP. In terms of biological role, catalyzes the reversible phosphorylation of UMP to UDP. The chain is Uridylate kinase from Methylococcus capsulatus (strain ATCC 33009 / NCIMB 11132 / Bath).